We begin with the raw amino-acid sequence, 423 residues long: MLDLKFVRDHFAEAEQRLATRGGAVDLSAFTDLDARRRTLLGESESLKAEKNQVSALIGKTKDKSQVQGEIARMKDVSVRIKELDEELKQVEGDLRTLLMTLPNLPHEDCPVGTSEDDNKEVRRWGQVPEFDFEAQSHWDIGERLDILDFERAGKLAGARFAIYKGAGARLERALINFMLDLHTGEHKYVEILPPLMVNRDTMTGTGQLPKFESDLFHLDDPDFFLIPTAEVPVTNIHRDEILADGDLPVCYAAYTPCFRKEAGSHGRDTRGLIRMHQFNKVELVKFARPEESDQELLKLLDNAEEVLRRLKLPYRVVDLCTGDIGFSAARTFDIEVWLPGQQTFREISSCSNFRDFQARRAAIRFRREEKGKPELVHTLNGSGLAVGRTLVAILENYQQEDGSVVIPEALRPYMGGVEKISA.

229 to 231 contacts L-serine; the sequence is TAE. 260–262 provides a ligand contact to ATP; sequence RKE. E283 is an L-serine binding site. 347 to 350 contacts ATP; sequence EISS. S383 is an L-serine binding site.

The protein belongs to the class-II aminoacyl-tRNA synthetase family. Type-1 seryl-tRNA synthetase subfamily. As to quaternary structure, homodimer. The tRNA molecule binds across the dimer.

It is found in the cytoplasm. It carries out the reaction tRNA(Ser) + L-serine + ATP = L-seryl-tRNA(Ser) + AMP + diphosphate + H(+). It catalyses the reaction tRNA(Sec) + L-serine + ATP = L-seryl-tRNA(Sec) + AMP + diphosphate + H(+). The protein operates within aminoacyl-tRNA biosynthesis; selenocysteinyl-tRNA(Sec) biosynthesis; L-seryl-tRNA(Sec) from L-serine and tRNA(Sec): step 1/1. In terms of biological role, catalyzes the attachment of serine to tRNA(Ser). Is also able to aminoacylate tRNA(Sec) with serine, to form the misacylated tRNA L-seryl-tRNA(Sec), which will be further converted into selenocysteinyl-tRNA(Sec). This Syntrophotalea carbinolica (strain DSM 2380 / NBRC 103641 / GraBd1) (Pelobacter carbinolicus) protein is Serine--tRNA ligase.